Consider the following 374-residue polypeptide: Protein RecA (374 aa).

66–73 lines the ATP pocket; the sequence is GPESSGKT. Residues 327–374 form a disordered region; the sequence is LGVGVHPEESATEPGADAASAAPADAAPAVPAPTTAKATKSKAAAAKS. Residues 338–374 show a composition bias toward low complexity; it reads TEPGADAASAAPADAAPAVPAPTTAKATKSKAAAAKS.

It belongs to the RecA family.

It localises to the cytoplasm. In terms of biological role, can catalyze the hydrolysis of ATP in the presence of single-stranded DNA, the ATP-dependent uptake of single-stranded DNA by duplex DNA, and the ATP-dependent hybridization of homologous single-stranded DNAs. It interacts with LexA causing its activation and leading to its autocatalytic cleavage. The sequence is that of Protein RecA from Streptomyces lividans.